The sequence spans 237 residues: MLQHTWLPKPPNLTLLSDEVHLWRIPLDQPESQLQDLAATLSSDELARANRFYFPEHRRRFTAGRGILRSILGGYLGVEPGQVKFDYESRGKPILGDRFAESGLLFNLSHSQNLALCAVNYTRQIGIDLEYLRPTSDLESLAKRFFLPREYELLRSLPDEQKQKIFFRYWTCKEAYLKATGDGIAKLEEIEIALTPTEPAKLQTAPAWSLLELVPDDNCVAAVAVAGFGWQPKFWHY.

Residues Asp128, Glu130, and Glu174 each contribute to the Mg(2+) site.

The protein belongs to the P-Pant transferase superfamily. Gsp/Sfp/HetI/AcpT family. Mg(2+) serves as cofactor.

It catalyses the reaction apo-[peptidyl-carrier protein] + CoA = holo-[peptidyl-carrier protein] + adenosine 3',5'-bisphosphate + H(+). Functionally, probably activates the acyl carrier protein (ACP) domain of HetM, by transferring the 4'-phosphopantetheinyl moiety of coenzyme A (CoA) to a serine residue. May be required for maintaining vegetative growth and probably acts via HetN to inhibit differentiation. The sequence is that of 4'-phosphopantetheinyl transferase HetI (hetI) from Nostoc sp. (strain PCC 7120 / SAG 25.82 / UTEX 2576).